Reading from the N-terminus, the 282-residue chain is HTH-type transcriptional activator RhaR (282 aa).

An HTH araC/xylS-type domain is found at 179–277 (DKLITALAGS…GMTPVQWRHR (99 aa)). DNA-binding regions (H-T-H motif) lie at residues 196–217 (EKFC…RTQT) and 244–267 (VSEV…NREV).

Binds DNA as a dimer.

It is found in the cytoplasm. Its function is as follows. Activates expression of the rhaSR operon in response to L-rhamnose. The sequence is that of HTH-type transcriptional activator RhaR from Enterobacter sp. (strain 638).